A 1752-amino-acid chain; its full sequence is DNA-directed RNA polymerase II subunit rpb1 (1752 aa).

Zn(2+) is bound by residues C69, C72, C79, H82, C109, C112, C150, and C175. Residues D487, D489, and D491 each contribute to the Mg(2+) site. The segment at 816 to 828 (PQEFFFHAMAGRE) is bridging helix. Residue K1252 forms a Glycyl lysine isopeptide (Lys-Gly) (interchain with G-Cter in ubiquitin) linkage. Phosphoserine occurs at positions 1489, 1499, 1506, and 1529. Position 1531 is a phosphotyrosine (Y1531). Residues 1554–1752 (TSPSYSPSSP…SPSYSPTSPS (199 aa)) form a disordered region. Tandem repeats lie at residues 1558-1564 (YSPSSPG), 1578-1584 (YSPTSPS), 1585-1591 (YSPTSPS), 1592-1598 (YSPTSPS), and 1599-1605 (YSPTSPS). The interval 1558–1752 (YSPSSPGYST…SPSYSPTSPS (195 aa)) is C-terminal domain (CTD); 26 X 7 AA approximate tandem repeats of Y-S-P-[TS]-S-P-S. A 6; approximate repeat occupies 1606–1612 (YSATSPS). A run of 20 repeats spans residues 1613-1619 (YSPTSPS), 1620-1626 (YSPTSPS), 1627-1633 (YSPTSPS), 1634-1640 (YSPTSPS), 1641-1647 (YSPTSPS), 1648-1654 (YSPTSPS), 1655-1661 (YSPTSPS), 1662-1668 (YSPTSPS), 1669-1675 (YSPTSPS), 1676-1682 (YSPTSPS), 1683-1689 (YSPTSPS), 1690-1696 (YSPTSPS), 1697-1703 (YSPTSPS), 1704-1710 (YSPTSPS), 1711-1717 (YSPTSPS), 1718-1724 (YSPTSPS), 1725-1731 (YSPTSPS), 1732-1738 (YSPTSPS), 1739-1745 (YSPTSPS), and 1746-1752 (YSPTSPS).

Belongs to the RNA polymerase beta' chain family. As to quaternary structure, component of the RNA polymerase II (Pol II) complex consisting of 12 subunits. The tandem 7 residues repeats in the C-terminal domain (CTD) can be highly phosphorylated. The phosphorylation activates Pol II. Phosphorylation occurs mainly at residues 'Ser-2' and 'Ser-5' of the heptapeptide repeat. The phosphorylation state is believed to result from the balanced action of site-specific CTD kinases and phosphatase, and a 'CTD code' that specifies the position of Pol II within the transcription cycle has been proposed. Post-translationally, following transcription stress, the elongating form of RNA polymerase II (RNA pol IIo) is polyubiquitinated via 'Lys-63'-linkages on Lys-1252 at DNA damage sites without leading to degradation: ubiquitination promotes RNA pol IIo backtracking to allow access by the transcription-coupled nucleotide excision repair (TC-NER) machinery. Subsequent def1-dependent polyubiquitination by the elongin complex via 'Lys-48'-linkages may lead to proteasome-mediated degradation; presumably at stalled RNA pol II where TC-NER has failed, to halt global transcription and enable 'last resort' DNA repair pathways.

The protein localises to the nucleus. It catalyses the reaction RNA(n) + a ribonucleoside 5'-triphosphate = RNA(n+1) + diphosphate. DNA-dependent RNA polymerase catalyzes the transcription of DNA into RNA using the four ribonucleoside triphosphates as substrates. Largest and catalytic component of RNA polymerase II which synthesizes mRNA precursors and many functional non-coding RNAs. Forms the polymerase active center together with the second largest subunit. Pol II is the central component of the basal RNA polymerase II transcription machinery. It is composed of mobile elements that move relative to each other. RPB1 is part of the core element with the central large cleft, the clamp element that moves to open and close the cleft and the jaws that are thought to grab the incoming DNA template. At the start of transcription, a single-stranded DNA template strand of the promoter is positioned within the central active site cleft of Pol II. A bridging helix emanates from RPB1 and crosses the cleft near the catalytic site and is thought to promote translocation of Pol II by acting as a ratchet that moves the RNA-DNA hybrid through the active site by switching from straight to bent conformations at each step of nucleotide addition. During transcription elongation, Pol II moves on the template as the transcript elongates. Elongation is influenced by the phosphorylation status of the C-terminal domain (CTD) of Pol II largest subunit (RPB1), which serves as a platform for assembly of factors that regulate transcription initiation, elongation, termination and mRNA processing. The polypeptide is DNA-directed RNA polymerase II subunit rpb1 (rpb1) (Schizosaccharomyces pombe (strain 972 / ATCC 24843) (Fission yeast)).